The sequence spans 149 residues: Glutamyl-tRNA(Gln) amidotransferase subunit C, mitochondrial (149 aa).

The transit peptide at 1-25 (MNHLHRLFRITQVDRPVLLAITRRL) directs the protein to the mitochondrion.

Belongs to the GatC family. Subunit of the heterotrimeric GatCAB amidotransferase (AdT) complex, composed of A, B and C subunits.

The protein resides in the mitochondrion. The enzyme catalyses L-glutamyl-tRNA(Gln) + L-glutamine + ATP + H2O = L-glutaminyl-tRNA(Gln) + L-glutamate + ADP + phosphate + H(+). Allows the formation of correctly charged Gln-tRNA(Gln) through the transamidation of misacylated Glu-tRNA(Gln) in the mitochondria. The reaction takes place in the presence of glutamine and ATP through an activated gamma-phospho-Glu-tRNA(Gln). This is Glutamyl-tRNA(Gln) amidotransferase subunit C, mitochondrial from Branchiostoma floridae (Florida lancelet).